The chain runs to 672 residues: DNA ligase (672 aa).

NAD(+) contacts are provided by residues 35–39 (DAEYD), 84–85 (SL), and E116. The active-site N6-AMP-lysine intermediate is the K118. The NAD(+) site is built by R139, E179, K295, and K319. Zn(2+) is bound by residues C413, C416, C431, and C436. The BRCT domain maps to 593–672 (PRSAPLTGKT…EEFLRLAGKI (80 aa)).

This sequence belongs to the NAD-dependent DNA ligase family. LigA subfamily. Mg(2+) is required as a cofactor. It depends on Mn(2+) as a cofactor.

The catalysed reaction is NAD(+) + (deoxyribonucleotide)n-3'-hydroxyl + 5'-phospho-(deoxyribonucleotide)m = (deoxyribonucleotide)n+m + AMP + beta-nicotinamide D-nucleotide.. Functionally, DNA ligase that catalyzes the formation of phosphodiester linkages between 5'-phosphoryl and 3'-hydroxyl groups in double-stranded DNA using NAD as a coenzyme and as the energy source for the reaction. It is essential for DNA replication and repair of damaged DNA. This Syntrophus aciditrophicus (strain SB) protein is DNA ligase.